Here is a 62-residue protein sequence, read N- to C-terminus: Metallothionein (62 aa).

Position 1 is an N-acetylmethionine (Met1). Residues 1–30 are beta; the sequence is MDPQDCKCETGASCSCGTTCSCSNCKCTSC. Cys6, Cys8, Cys14, Cys16, Cys20, Cys22, Cys25, Cys27, Cys30, Cys34, Cys35, Cys37, Cys38, Cys42, Cys45, Cys49, Cys51, Cys58, Cys60, and Cys61 together coordinate a divalent metal cation. Residues 31 to 62 are alpha; that stretch reads KKSCCSCCPAECSKCSQGCHCEKGSKKCSCCN.

It belongs to the metallothionein superfamily. Type 1 family.

Functionally, metallothioneins have a high content of cysteine residues that bind various heavy metals. The protein is Metallothionein (mt-a) of Xenopus laevis (African clawed frog).